The sequence spans 453 residues: Phosphoglucosamine mutase (453 aa).

Ser110 serves as the catalytic Phosphoserine intermediate. Mg(2+) contacts are provided by Ser110, Asp247, Asp249, and Asp251. Ser110 carries the post-translational modification Phosphoserine.

The protein belongs to the phosphohexose mutase family. Requires Mg(2+) as cofactor. Activated by phosphorylation.

It catalyses the reaction alpha-D-glucosamine 1-phosphate = D-glucosamine 6-phosphate. Functionally, catalyzes the conversion of glucosamine-6-phosphate to glucosamine-1-phosphate. The polypeptide is Phosphoglucosamine mutase (Tropheryma whipplei (strain TW08/27) (Whipple's bacillus)).